A 276-amino-acid chain; its full sequence is Large ribosomal subunit protein uL2 (276 aa).

2 disordered regions span residues 34-55 (LQPL…RHQG) and 221-276 (RGSV…RRTK). Polar residues predominate over residues 37–48 (LKNNAGRNNNGR).

The protein belongs to the universal ribosomal protein uL2 family. As to quaternary structure, part of the 50S ribosomal subunit. Forms a bridge to the 30S subunit in the 70S ribosome.

Its function is as follows. One of the primary rRNA binding proteins. Required for association of the 30S and 50S subunits to form the 70S ribosome, for tRNA binding and peptide bond formation. It has been suggested to have peptidyltransferase activity; this is somewhat controversial. Makes several contacts with the 16S rRNA in the 70S ribosome. The chain is Large ribosomal subunit protein uL2 from Enterococcus faecalis (strain ATCC 700802 / V583).